A 914-amino-acid chain; its full sequence is Protein translocase subunit SecA (914 aa).

ATP is bound by residues Gln87, 105-109 (GEGKT), and Asp508. Zn(2+)-binding residues include Cys898, Cys900, Cys909, and His910.

The protein belongs to the SecA family. As to quaternary structure, monomer and homodimer. Part of the essential Sec protein translocation apparatus which comprises SecA, SecYEG and auxiliary proteins SecDF-YajC and YidC. Requires Zn(2+) as cofactor.

Its subcellular location is the cell inner membrane. It localises to the cytoplasm. It carries out the reaction ATP + H2O + cellular proteinSide 1 = ADP + phosphate + cellular proteinSide 2.. Its function is as follows. Part of the Sec protein translocase complex. Interacts with the SecYEG preprotein conducting channel. Has a central role in coupling the hydrolysis of ATP to the transfer of proteins into and across the cell membrane, serving both as a receptor for the preprotein-SecB complex and as an ATP-driven molecular motor driving the stepwise translocation of polypeptide chains across the membrane. This is Protein translocase subunit SecA from Xylella fastidiosa (strain M12).